A 76-amino-acid polypeptide reads, in one-letter code: Brevinin-2ISb (76 aa).

The N-terminal stretch at 1–22 (MFTMKKSLLVLFFLGTISLSLC) is a signal peptide. The propeptide at 23–41 (QEERNADEEDGGEATEEEV) is removed in mature form. Cysteines 70 and 76 form a disulfide.

As to expression, expressed by the skin glands.

The protein localises to the secreted. Has antimicrobial activity against Gram-negative bacterium E.coli ATCC 8739 (MIC=12.5 ug), against Gram positive bacteria S.aureus ATCC 6538 (MIC=6.3 ug) and B.subtilis ATCC 6633 (MIC=25 ug). Has no activity against methicillin-resistant S.aureus ATCC 43300 (MIC= ug) and fungus C.albicans ATCC 90028. The sequence is that of Brevinin-2ISb from Odorrana ishikawae (Ishikawa's frog).